We begin with the raw amino-acid sequence, 477 residues long: Cysteine--tRNA ligase (477 aa).

Position 30 (cysteine 30) interacts with Zn(2+). A 'HIGH' region motif is present at residues 32 to 42 (PTVYDYNHIGH). 3 residues coordinate Zn(2+): cysteine 209, histidine 234, and glutamate 238. Positions 267–271 (KMSKS) match the 'KMSKS' region motif. Lysine 270 lines the ATP pocket.

It belongs to the class-I aminoacyl-tRNA synthetase family. Zn(2+) is required as a cofactor.

It localises to the cytoplasm. The catalysed reaction is tRNA(Cys) + L-cysteine + ATP = L-cysteinyl-tRNA(Cys) + AMP + diphosphate. The chain is Cysteine--tRNA ligase from Staphylothermus marinus (strain ATCC 43588 / DSM 3639 / JCM 9404 / F1).